Consider the following 570-residue polypeptide: GTPase Obg (570 aa).

Positions 2–168 constitute an Obg domain; that stretch reads SDFVDRVTVH…RDIILELKSI (167 aa). Residues 15 to 43 form a disordered region; sequence GDGGNGSAGIRREKYKPLAGPNGGNGGKG. Positions 169-349 constitute an OBG-type G domain; that stretch reads ADVALVGFPS…LNFALAKLVK (181 aa). GTP is bound by residues 175-182, 200-204, 221-224, 301-304, and 330-332; these read GFPSAGKS, FTTLV, DVPG, NKID, and STA. Positions 182 and 202 each coordinate Mg(2+). One can recognise an OCT domain in the interval 382-468; that stretch reads GRNAQVREFE…ERAVAFDWDP (87 aa). Residues 521–570 are disordered; that stretch reads RAAMQAERAAGHWADPSIDDDRHDEQSLFGRGEVEEYEDEPGADGSRQLD.

This sequence belongs to the TRAFAC class OBG-HflX-like GTPase superfamily. OBG GTPase family. Monomer. Requires Mg(2+) as cofactor.

It localises to the cytoplasm. Functionally, an essential GTPase which binds GTP, GDP and possibly (p)ppGpp with moderate affinity, with high nucleotide exchange rates and a fairly low GTP hydrolysis rate. Plays a role in control of the cell cycle, stress response, ribosome biogenesis and in those bacteria that undergo differentiation, in morphogenesis control. The protein is GTPase Obg of Bifidobacterium animalis subsp. lactis (strain AD011).